The following is a 33-amino-acid chain: uncharacterized protein (33 aa).

Residues 11 to 31 form a helical membrane-spanning segment; that stretch reads LALVIYMSVVLLLMVGVPLLF.

It localises to the membrane. This is an uncharacterized protein from Saccharomyces cerevisiae (strain ATCC 204508 / S288c) (Baker's yeast).